Consider the following 575-residue polypeptide: Physarolisin (575 aa).

An N-terminal signal peptide occupies residues 1-18 (MRLLSLLFLLGLATLSFA). The propeptide at 19 to 173 (VRSQWAQQGR…SIKNARTQVG (155 aa)) is removed in mature form. A Peptidase S53 domain is found at 179 to 574 (YIVPYVIFDL…SKLLAFVQTL (396 aa)). N-linked (GlcNAc...) asparagine glycosylation is present at asparagine 200. Active-site charge relay system residues include glutamate 248 and aspartate 252. 4 N-linked (GlcNAc...) asparagine glycosylation sites follow: asparagine 262, asparagine 307, asparagine 380, and asparagine 453. Catalysis depends on serine 484, which acts as the Charge relay system. 4 residues coordinate Ca(2+): aspartate 529, isoleucine 530, glycine 552, and aspartate 554.

Ca(2+) serves as cofactor. Autocatalytically processed. Post-translationally, N-glycosylated.

It carries out the reaction Milk clotting activity. Preferential cleavage of 8-Gly-|-Ser-9 in B chain of insulin most rapidly, followed by 11-Leu-|-Val-12, 19-Cys(SO(3)H)-|-Gly and 24-Phe-|-Phe-25. No action on Ac-Phe-Tyr(I)2.. Inhibited by diisopropylfluorophosphate (DFP) and diazoacetyl-D,L-norleucine methyl ester (DAN). This chain is Physarolisin, found in Physarum polycephalum (Slime mold).